The sequence spans 1174 residues: Fanconi anemia group J protein homolog (1174 aa).

Residues 11 to 445 (GGVKIHFPCR…KSHEPLRDVC (435 aa)) enclose the Helicase ATP-binding domain. Polar residues predominate over residues 101–126 (NLDTSPHFNSPSKPSSGRNGVSTPCQ). 2 disordered regions span residues 101–160 (NLDT…EKKR) and 187–208 (LASE…DRKD). Positions 134-143 (LAAKLSAKKQ) are enriched in low complexity. The short motif at 158 to 175 (KKRIRPLETTQQIRKRHC) is the Nuclear localization signal element. 185 to 192 (ARLASEKR) serves as a coordination point for ATP. Residues cysteine 286, cysteine 301, cysteine 313, and cysteine 353 each contribute to the [4Fe-4S] cluster site. Positions 393–396 (VILD) match the DEAH box motif. The interaction with BRCA1 stretch occupies residues 888–1063 (SRRHQKVTNR…SNETADTSLG (176 aa)). Composition is skewed to polar residues over residues 923–935 (TSVS…SPEN) and 990–1001 (SRSSSPTFGKQT). Disordered stretches follow at residues 923 to 1001 (TSVS…GKQT) and 1102 to 1155 (LSPG…SSHS). Residues serine 929, serine 932, and serine 994 each carry the phosphoserine modification. A compositionally biased stretch (acidic residues) spans 1138-1147 (DTNEENGELV). Lysine 1174 carries the post-translational modification N6-acetyllysine.

This sequence belongs to the DEAD box helicase family. DEAH subfamily. Binds directly to the BRCT domains of BRCA1. Interacts with the CIA complex components CIAO1, CIAO2B and MMS19. It depends on [4Fe-4S] cluster as a cofactor. In terms of processing, phosphorylated. Phosphorylation is necessary for interaction with BRCA1, and is cell-cycle regulated.

The protein localises to the nucleus. Its subcellular location is the cytoplasm. The catalysed reaction is Couples ATP hydrolysis with the unwinding of duplex DNA at the replication fork by translocating in the 5'-3' direction. This creates two antiparallel DNA single strands (ssDNA). The leading ssDNA polymer is the template for DNA polymerase III holoenzyme which synthesizes a continuous strand.. It carries out the reaction ATP + H2O = ADP + phosphate + H(+). Functionally, DNA-dependent helicase and 5' to 3' DNA helicase required for the maintenance of chromosomal stability. Acts late in the Fanconi anemia pathway, after FANCD2 ubiquitination. Involved in the repair of DNA double-strand breaks by homologous recombination in a manner that depends on its association with BRCA1. Involved in the repair of abasic sites at replication forks by promoting the degradation of DNA-protein cross-links: acts by catalyzing unfolding of HMCES DNA-protein cross-link via its helicase activity, exposing the underlying DNA and enabling cleavage of the DNA-protein adduct by the SPRTN metalloprotease. Can unwind RNA:DNA hybrids and G-quadruplex DNA. The chain is Fanconi anemia group J protein homolog from Mus musculus (Mouse).